The following is a 664-amino-acid chain: Glycine--tRNA ligase beta subunit (664 aa).

It belongs to the class-II aminoacyl-tRNA synthetase family. As to quaternary structure, tetramer of two alpha and two beta subunits.

It localises to the cytoplasm. The catalysed reaction is tRNA(Gly) + glycine + ATP = glycyl-tRNA(Gly) + AMP + diphosphate. This Rickettsia felis (strain ATCC VR-1525 / URRWXCal2) (Rickettsia azadi) protein is Glycine--tRNA ligase beta subunit.